The sequence spans 213 residues: Pyrrolidone-carboxylate peptidase (213 aa).

Active-site residues include Glu-80, Cys-143, and His-165.

It belongs to the peptidase C15 family. Homotetramer.

It is found in the cytoplasm. It carries out the reaction Release of an N-terminal pyroglutamyl group from a polypeptide, the second amino acid generally not being Pro.. Its function is as follows. Removes 5-oxoproline from various penultimate amino acid residues except L-proline. The protein is Pyrrolidone-carboxylate peptidase of Erwinia tasmaniensis (strain DSM 17950 / CFBP 7177 / CIP 109463 / NCPPB 4357 / Et1/99).